We begin with the raw amino-acid sequence, 366 residues long: tRNA/tmRNA (uracil-C(5))-methyltransferase (366 aa).

Residues Q190, Y218, N223, E239, and D299 each contribute to the S-adenosyl-L-methionine site. The active-site Nucleophile is C324. Residue E358 is the Proton acceptor of the active site.

It belongs to the class I-like SAM-binding methyltransferase superfamily. RNA M5U methyltransferase family. TrmA subfamily.

It catalyses the reaction uridine(54) in tRNA + S-adenosyl-L-methionine = 5-methyluridine(54) in tRNA + S-adenosyl-L-homocysteine + H(+). The enzyme catalyses uridine(341) in tmRNA + S-adenosyl-L-methionine = 5-methyluridine(341) in tmRNA + S-adenosyl-L-homocysteine + H(+). Its function is as follows. Dual-specificity methyltransferase that catalyzes the formation of 5-methyluridine at position 54 (m5U54) in all tRNAs, and that of position 341 (m5U341) in tmRNA (transfer-mRNA). This Edwardsiella ictaluri (strain 93-146) protein is tRNA/tmRNA (uracil-C(5))-methyltransferase.